A 330-amino-acid chain; its full sequence is DNA repair and recombination protein RadA (330 aa).

An ATP-binding site is contributed by glycine 124–threonine 131.

The protein belongs to the eukaryotic RecA-like protein family.

Its function is as follows. Involved in DNA repair and in homologous recombination. Binds and assemble on single-stranded DNA to form a nucleoprotein filament. Hydrolyzes ATP in a ssDNA-dependent manner and promotes DNA strand exchange between homologous DNA molecules. The polypeptide is DNA repair and recombination protein RadA (Pyrobaculum neutrophilum (strain DSM 2338 / JCM 9278 / NBRC 100436 / V24Sta) (Thermoproteus neutrophilus)).